Consider the following 333-residue polypeptide: HTH-type transcriptional regulator pepR1 (333 aa).

An HTH lacI-type domain is found at 6–60 (VTIYDVAREAKVSMATVSRVVNGNNNVRKETRDRVMEVIKRLHYQPNAVAQGLAS). The segment at residues 8 to 27 (IYDVAREAKVSMATVSRVVN) is a DNA-binding region (H-T-H motif).

Its function is as follows. Transcriptional regulator of the pepQ gene for prolidase. This is HTH-type transcriptional regulator pepR1 (pepR1) from Lactobacillus delbrueckii subsp. lactis.